Reading from the N-terminus, the 311-residue chain is Malate dehydrogenase (311 aa).

Residues 7-13 (GAAGGIG) and Asp34 each bind NAD(+). The substrate site is built by Arg81 and Arg87. NAD(+)-binding positions include Asn94 and 117-119 (ITN). Asn119 and Arg153 together coordinate substrate. The Proton acceptor role is filled by His177. Met227 contributes to the NAD(+) binding site.

This sequence belongs to the LDH/MDH superfamily. MDH type 1 family. Homodimer.

It catalyses the reaction (S)-malate + NAD(+) = oxaloacetate + NADH + H(+). Functionally, catalyzes the reversible oxidation of malate to oxaloacetate. The sequence is that of Malate dehydrogenase from Vibrio campbellii (strain ATCC BAA-1116).